A 357-amino-acid polypeptide reads, in one-letter code: Glucose 1-dehydrogenase (357 aa).

Aspartate 38 contributes to the Zn(2+) binding site. Substrate is bound by residues threonine 40 and histidine 49. Zn(2+)-binding residues include histidine 63 and glutamate 64. 2 residues coordinate substrate: glutamate 114 and glutamate 150. Glutamate 150 is a binding site for Zn(2+). NADP(+)-binding positions include 181–184, 207–208, serine 228, 272–274, and 301–303; these read NGSL, RR, LGV, and SVN. Asparagine 303 is a substrate binding site.

It belongs to the zinc-containing alcohol dehydrogenase family. Glucose 1-dehydrogenase subfamily. In terms of assembly, homodimer. Zn(2+) is required as a cofactor.

It carries out the reaction D-glucose + NAD(+) = D-glucono-1,5-lactone + NADH + H(+). It catalyses the reaction D-glucose + NADP(+) = D-glucono-1,5-lactone + NADPH + H(+). With respect to regulation, activated by molar concentrations of KCl or NaCl. Inhibited by EDTA in vitro. Functionally, catalyzes the NAD(P)(+)-dependent oxidation of D-glucose to D-gluconate. Displays broad substrate specificity since it is able to catalyze the oxidation of a number of alternative aldose sugars, such as D-xylose, D-galactose, and D-fucose, to the corresponding glyconate. Can utilize both NAD(+) and NADP(+) as electron acceptor, with a preference for NADP(+). Physiologically, seems to be involved in the degradation of glucose through a modified Entner-Doudoroff pathway. This chain is Glucose 1-dehydrogenase, found in Haloferax mediterranei (strain ATCC 33500 / DSM 1411 / JCM 8866 / NBRC 14739 / NCIMB 2177 / R-4) (Halobacterium mediterranei).